Here is a 229-residue protein sequence, read N- to C-terminus: Peptidase E (229 aa).

Active-site charge relay system residues include Ser-120, Asp-135, and His-157.

It belongs to the peptidase S51 family.

The protein resides in the cytoplasm. It carries out the reaction Dipeptidase E catalyzes the hydrolysis of dipeptides Asp-|-Xaa. It does not act on peptides with N-terminal Glu, Asn or Gln, nor does it cleave isoaspartyl peptides.. In terms of biological role, hydrolyzes dipeptides containing N-terminal aspartate residues. May play a role in allowing the cell to use peptide aspartate to spare carbon otherwise required for the synthesis of the aspartate family of amino acids. The polypeptide is Peptidase E (Salmonella paratyphi C (strain RKS4594)).